The chain runs to 887 residues: 3-hydroxy-3-methylglutaryl-coenzyme A reductase (887 aa).

Topologically, residues 1–9 are cytoplasmic; sequence MLSRLFRMH. A helical transmembrane segment spans residues 10–39; sequence GLFVASHPWEVIVGTVTLTICMMSMNMFTG. The Lumenal portion of the chain corresponds to 40–56; that stretch reads NNKICGWNYECPKFEED. A helical transmembrane segment spans residues 57-78; it reads VLSSDIIILTITRCIAILYIYF. One can recognise an SSD domain in the interval 61-218; it reads DIIILTITRC…MTFFPACVSL (158 aa). The INSIG-binding motif motif lies at 75 to 78; the sequence is YIYF. Residues 79 to 89 lie on the Cytoplasmic side of the membrane; sequence QFQNLRQLGSK. A Glycyl lysine isopeptide (Lys-Gly) (interchain with G-Cter in ubiquitin) cross-link involves residue Lys-89. A helical transmembrane segment spans residues 90–114; it reads YILGIAGLFTIFSSFVFSTVVIHFL. Over 115–123 the chain is Lumenal; the sequence is DKELTGLNE. A helical transmembrane segment spans residues 124–149; it reads ALPFFLLLIDLSRASALAKFALSSNS. Over 150 to 159 the chain is Cytoplasmic; it reads QDEVRENIAR. The chain crosses the membrane as a helical span at residues 160 to 187; that stretch reads GMAILGPTFTLDALVECLVIGVGTMSGV. Residues 188-191 lie on the Lumenal side of the membrane; it reads RQLE. The chain crosses the membrane as a helical span at residues 192–220; sequence IMCCFGCMSVLANYFVFMTFFPACVSLVL. Topologically, residues 221–248 are cytoplasmic; that stretch reads ELSRESREGRPIWQLSHFARVLEEEENK. Lys-248 participates in a covalent cross-link: Glycyl lysine isopeptide (Lys-Gly) (interchain with G-Cter in ubiquitin). The helical transmembrane segment at 249–275 threads the bilayer; the sequence is PNPVTQRVKMIMSLGLVLVHAHSRWIA. The Lumenal portion of the chain corresponds to 276-314; sequence DPSPQNSTAEQAKVSLGLDEDVSKRIEPSVSLWQFYLSK. Asn-281 is a glycosylation site (N-linked (GlcNAc...) asparagine). The helical transmembrane segment at 315 to 339 threads the bilayer; the sequence is MISMDIEQVITLSLAFLLAVKYIFF. At 340–887 the chain is on the cytoplasmic side; it reads EQAETESTLS…LQGTCTKKAA (548 aa). Catalysis depends on charge relay system residues Glu-558, Lys-690, and Asp-766. His-865 (proton donor) is an active-site residue. Ser-871 is modified (phosphoserine).

The protein belongs to the HMG-CoA reductase family. Homotetramer. Homodimer. Interacts (via its SSD) with INSIG1; the interaction, accelerated by sterols, leads to the recruitment of HMGCR to AMFR/gp78 for its ubiquitination by the sterol-mediated ERAD pathway. Interacts with UBIAD1. Undergoes sterol-mediated ubiquitination and ER-associated degradation (ERAD). Accumulation of sterols in the endoplasmic reticulum (ER) membrane, triggers binding of the reductase to the ER membrane protein INSIG1 or INSIG2. The INSIG1 binding leads to the recruitment of the ubiquitin ligase, AMFR/gp78, RNF139 or RNF145, initiating ubiquitination of the reductase. The ubiquitinated reductase is then extracted from the ER membrane and delivered to cytosolic 26S proteosomes by a mechanism probably mediated by the ATPase Valosin-containing protein VCP/p97. The INSIG2-binding leads to the recruitment of the ubiquitin ligase RNF139, initiating ubiquitination of the reductase. Lys-248 is the main site of ubiquitination. Ubiquitination is enhanced by the presence of a geranylgeranylated protein. In terms of processing, N-glycosylated. Deglycosylated by NGLY1 on release from the endoplasmic reticulum (ER) in a sterol-mediated manner. Post-translationally, phosphorylated. Phosphorylation at Ser-871 reduces the catalytic activity.

It localises to the endoplasmic reticulum membrane. The protein resides in the peroxisome membrane. It carries out the reaction (R)-mevalonate + 2 NADP(+) + CoA = (3S)-3-hydroxy-3-methylglutaryl-CoA + 2 NADPH + 2 H(+). It participates in metabolic intermediate biosynthesis; (R)-mevalonate biosynthesis; (R)-mevalonate from acetyl-CoA: step 3/3. Regulated by a negative feedback mechanism through sterols and non-sterol metabolites derived from mevalonate. Phosphorylation at Ser-871 down-regulates the catalytic activity. Functionally, catalyzes the conversion of (3S)-hydroxy-3-methylglutaryl-CoA (HMG-CoA) to mevalonic acid, the rate-limiting step in the synthesis of cholesterol and other isoprenoids, thus plays a critical role in cellular cholesterol homeostasis. The sequence is that of 3-hydroxy-3-methylglutaryl-coenzyme A reductase (Hmgcr) from Mus musculus (Mouse).